The primary structure comprises 210 residues: Adenylate kinase (210 aa).

ATP is bound at residue 10-15 (GSGKGT). The NMP stretch occupies residues 28–57 (SVGKVLRTVMESNTAEADVVKKFIKSGKLV). AMP is bound by residues Arg34, 55-57 (KLV), 83-86 (GYPR), and Gln90. The LID stretch occupies residues 120 to 158 (GRISCTDCGTIYNKLYCMPKINGVCDICNSSSFQNRVDD). Arg121 contributes to the ATP binding site. Residues Cys124 and Cys127 each coordinate Zn(2+). 130 to 131 (IY) is a binding site for ATP. Cys144 and Cys147 together coordinate Zn(2+). AMP contacts are provided by Arg155 and Arg166. Residue Gln194 participates in ATP binding.

Belongs to the adenylate kinase family. In terms of assembly, monomer.

Its subcellular location is the cytoplasm. The catalysed reaction is AMP + ATP = 2 ADP. The protein operates within purine metabolism; AMP biosynthesis via salvage pathway; AMP from ADP: step 1/1. Its function is as follows. Catalyzes the reversible transfer of the terminal phosphate group between ATP and AMP. Plays an important role in cellular energy homeostasis and in adenine nucleotide metabolism. The protein is Adenylate kinase of Orientia tsutsugamushi (strain Boryong) (Rickettsia tsutsugamushi).